Reading from the N-terminus, the 161-residue chain is Kininogen-2 (161 aa).

An N-terminal signal peptide occupies residues 1-23 (MRLWFCLSFFVVLCLEHFPGTLA). The cysteines at positions 150 and 156 are disulfide-linked. Val-160 carries the valine amide modification.

This sequence belongs to the bradykinin-related peptide family. In terms of tissue distribution, expressed by the skin glands.

The protein resides in the secreted. Inhibits ACE with a Ki of 1.6 uM, and targets B2 bradykinin receptor (BDKRB2). Provokes contraction of smooth muscle preparation (ileum). In vivo, induces an early hyperalgesic effects in living rats after intraplantar injection. Functionally, inhibits the bradykinin-induced in vitro relaxation of rat arterial smooth muscle and constriction of intestinal smooth muscle. May target bradykinin receptors (BDKRB). The protein is Kininogen-2 of Bombina orientalis (Oriental fire-bellied toad).